The chain runs to 298 residues: N-acetylmuramic acid 6-phosphate etherase (298 aa).

In terms of domain architecture, SIS spans 55–218; it reads ASKRYREGGR…STGVMIKQGK (164 aa). Glutamate 83 (proton donor) is an active-site residue. Residue glutamate 114 is part of the active site.

It belongs to the GCKR-like family. MurNAc-6-P etherase subfamily. In terms of assembly, homodimer.

It catalyses the reaction N-acetyl-D-muramate 6-phosphate + H2O = N-acetyl-D-glucosamine 6-phosphate + (R)-lactate. It functions in the pathway amino-sugar metabolism; N-acetylmuramate degradation. In terms of biological role, specifically catalyzes the cleavage of the D-lactyl ether substituent of MurNAc 6-phosphate, producing GlcNAc 6-phosphate and D-lactate. The protein is N-acetylmuramic acid 6-phosphate etherase of Lactobacillus johnsonii (strain CNCM I-12250 / La1 / NCC 533).